The sequence spans 425 residues: Elongation factor 1-alpha (425 aa).

The tr-type G domain maps to 5–221; the sequence is KPHMNLAVIG…DLFKMPDMPT (217 aa). Residues 14–21 form a G1 region; the sequence is GHIDHGKS. GTP is bound at residue 14–21; the sequence is GHIDHGKS. Ser-21 serves as a coordination point for Mg(2+). The G2 stretch occupies residues 70-74; sequence GITID. A G3 region spans residues 91 to 94; it reads DCPG. GTP is bound by residues 91–95 and 146–149; these read DCPGH and NKMD. Positions 146 to 149 are G4; that stretch reads NKMD. The interval 185 to 187 is G5; sequence SAF.

Belongs to the TRAFAC class translation factor GTPase superfamily. Classic translation factor GTPase family. EF-Tu/EF-1A subfamily.

The protein localises to the cytoplasm. It carries out the reaction GTP + H2O = GDP + phosphate + H(+). Functionally, GTP hydrolase that promotes the GTP-dependent binding of aminoacyl-tRNA to the A-site of ribosomes during protein biosynthesis. This Methanocorpusculum labreanum (strain ATCC 43576 / DSM 4855 / Z) protein is Elongation factor 1-alpha.